We begin with the raw amino-acid sequence, 61 residues long: Large ribosomal subunit protein bL32 (61 aa).

Residues 1 to 16 are compositionally biased toward basic residues; it reads MAVPKRKTSPSRRGMR. Residues 1-44 form a disordered region; it reads MAVPKRKTSPSRRGMRRSADALKAPTYVEDKDSGELRRPHHIDL. Over residues 28–44 the composition is skewed to basic and acidic residues; the sequence is VEDKDSGELRRPHHIDL.

It belongs to the bacterial ribosomal protein bL32 family.

This chain is Large ribosomal subunit protein bL32, found in Methylobacterium nodulans (strain LMG 21967 / CNCM I-2342 / ORS 2060).